A 301-amino-acid chain; its full sequence is Protoheme IX farnesyltransferase 1 (301 aa).

The next 9 membrane-spanning stretches (helical) occupy residues 29–49, 51–71, 101–121, 123–143, 150–170, 177–197, 223–243, 244–264, and 281–301; these read VVAL…PTAV, VQPL…AAAL, ALIF…VLVN, LTAW…TAYL, NIVI…TAVT, ALLL…ALAI, CILL…LVGM, CGPM…YKAW, and FSIY…YLWS.

This sequence belongs to the UbiA prenyltransferase family. Protoheme IX farnesyltransferase subfamily.

It localises to the cell inner membrane. It carries out the reaction heme b + (2E,6E)-farnesyl diphosphate + H2O = Fe(II)-heme o + diphosphate. It functions in the pathway porphyrin-containing compound metabolism; heme O biosynthesis; heme O from protoheme: step 1/1. Converts heme B (protoheme IX) to heme O by substitution of the vinyl group on carbon 2 of heme B porphyrin ring with a hydroxyethyl farnesyl side group. This is Protoheme IX farnesyltransferase 1 from Shewanella putrefaciens (strain CN-32 / ATCC BAA-453).